The primary structure comprises 203 residues: NADH-quinone oxidoreductase subunit C (203 aa).

It belongs to the complex I 30 kDa subunit family. In terms of assembly, NDH-1 is composed of 14 different subunits. Subunits NuoB, C, D, E, F, and G constitute the peripheral sector of the complex.

Its subcellular location is the cell inner membrane. The catalysed reaction is a quinone + NADH + 5 H(+)(in) = a quinol + NAD(+) + 4 H(+)(out). NDH-1 shuttles electrons from NADH, via FMN and iron-sulfur (Fe-S) centers, to quinones in the respiratory chain. The immediate electron acceptor for the enzyme in this species is believed to be ubiquinone. Couples the redox reaction to proton translocation (for every two electrons transferred, four hydrogen ions are translocated across the cytoplasmic membrane), and thus conserves the redox energy in a proton gradient. This Delftia acidovorans (strain DSM 14801 / SPH-1) protein is NADH-quinone oxidoreductase subunit C.